We begin with the raw amino-acid sequence, 234 residues long: Sugar fermentation stimulation protein A (234 aa).

The H-T-H motif DNA-binding region spans 201-220; sequence LLSEAQQRGVEILAYKAEIS.

The protein belongs to the SfsA family.

Binds to DNA non-specifically. Could be a regulatory factor involved in maltose metabolism. The chain is Sugar fermentation stimulation protein A from Shigella boydii serotype 4 (strain Sb227).